Consider the following 811-residue polypeptide: Vacuolar protein sorting-associated protein 70 (811 aa).

The span at 1 to 21 (MRMIQRERKREKEEGQLKERT) shows a compositional bias: basic and acidic residues. Residues 1–63 (MRMIQRERKR…MNDSFTLTSR (63 aa)) form a disordered region. N55 is a glycosylation site (N-linked (GlcNAc...) asparagine). The helical transmembrane segment at 90-110 (FMYLILASLLLYMGFVAAFAP) threads the bilayer. Residue N237 is glycosylated (N-linked (GlcNAc...) asparagine). Residues 334-367 (FSDTPGDPTTPGYPSKDSDTEHMSPVGRVPRIPS) are disordered. Over residues 336-345 (DTPGDPTTPG) the composition is skewed to low complexity. Residues H445, D456, and D522 each contribute to the Zn(2+) site. N568 and N599 each carry an N-linked (GlcNAc...) asparagine glycan. A Zn(2+)-binding site is contributed by H607. An N-linked (GlcNAc...) asparagine glycan is attached at N670.

Belongs to the peptidase M28 family. M28B subfamily. The cofactor is Zn(2+).

It localises to the membrane. Involved in vacuolar protein sorting. In Saccharomyces cerevisiae (strain ATCC 204508 / S288c) (Baker's yeast), this protein is Vacuolar protein sorting-associated protein 70 (VPS70).